A 429-amino-acid polypeptide reads, in one-letter code: Ribosomal RNA small subunit methyltransferase B (429 aa).

Residues 254–260, D277, D303, and D322 contribute to the S-adenosyl-L-methionine site; that span reads CAAPGGK. C375 serves as the catalytic Nucleophile.

This sequence belongs to the class I-like SAM-binding methyltransferase superfamily. RsmB/NOP family.

It localises to the cytoplasm. The enzyme catalyses cytidine(967) in 16S rRNA + S-adenosyl-L-methionine = 5-methylcytidine(967) in 16S rRNA + S-adenosyl-L-homocysteine + H(+). Its function is as follows. Specifically methylates the cytosine at position 967 (m5C967) of 16S rRNA. The protein is Ribosomal RNA small subunit methyltransferase B of Yersinia pseudotuberculosis serotype O:1b (strain IP 31758).